A 328-amino-acid chain; its full sequence is Interferon regulatory factor 1 (328 aa).

Residues 5–113 constitute a DNA-binding region (IRF tryptophan pentad repeat); sequence RMRMRPWLEM…SAVRVYRMLP (109 aa). An N6-acetyllysine modification is found at K78. A disordered region spans residues 92–164; the sequence is EEVKDQSRNK…STLPDDHSSY (73 aa). Low complexity predominate over residues 141-157; it reads GDSSPDTLSDGLSSSTL. Residues K276 and K300 each participate in a glycyl lysine isopeptide (Lys-Gly) (interchain with G-Cter in SUMO) cross-link.

The protein belongs to the IRF family. In terms of assembly, monomer. Homodimer. Interacts with EP300. Interacts with MYD88. Interacts with PIAS3. Interacts with SPOP. Post-translationally, phosphorylated by CK2 and this positively regulates its activity. Sumoylation represses the transcriptional activity and displays enhanced resistance to protein degradation. Sumoylated by UBE2I/UBC9 and SUMO1. Inactivates the tumor suppressor activity. Elevated levels in tumor cells. Major site is Lys-276. Sumoylation is enhanced by PIAS3. Desumoylated by SENP1 in tumor cells and appears to compete with ubiquitination on C-terminal sites. In terms of processing, ubiquitinated in a SPOP-depedent manner. Appears to compete with sumoylation on C-terminal sites.

It is found in the nucleus. The protein resides in the cytoplasm. Activated by MYD88. Functionally, transcriptional regulator which displays a remarkable functional diversity in the regulation of cellular responses. Regulates transcription of IFN and IFN-inducible genes, host response to viral and bacterial infections, regulation of many genes expressed during hematopoiesis, inflammation, immune responses and cell proliferation and differentiation, regulation of the cell cycle and induction of growth arrest and programmed cell death following DNA damage. Stimulates both innate and acquired immune responses through the activation of specific target genes and can act as a transcriptional activator and repressor regulating target genes by binding to an interferon-stimulated response element (ISRE) in their promoters. Has an essentail role in IFNG-dependent immunity to mycobacteria. Binds to a consensus sequence in gene promoters. Its target genes for transcriptional activation activity include: genes involved in anti-viral response, such as IFN-alpha/beta, RIGI, TNFSF10/TRAIL, ZBP1, OAS1/2, PIAS1/GBP, EIF2AK2/PKR and RSAD2/viperin; antibacterial response, such as GBP2, GBP5 and NOS2/INOS; anti-proliferative response, such as p53/TP53, LOX and CDKN1A; apoptosis, such as BBC3/PUMA, CASP1, CASP7 and CASP8; immune response, such as IL7, IL12A/B and IL15, PTGS2/COX2 and CYBB; DNA damage responses and DNA repair, such as POLQ/POLH; MHC class I expression, such as TAP1, PSMB9/LMP2, PSME1/PA28A, PSME2/PA28B and B2M and MHC class II expression, such as CIITA; metabolic enzymes, such as ACOD1/IRG1. Represses genes involved in anti-proliferative response, such as BIRC5/survivin, CCNB1, CCNE1, CDK1, CDK2 and CDK4 and in immune response, such as FOXP3, IL4, ANXA2 and TLR4. Stimulates p53/TP53-dependent transcription through enhanced recruitment of EP300 leading to increased acetylation of p53/TP53. Plays an important role in immune response directly affecting NK maturation and activity, macrophage production of IL12, Th1 development and maturation of CD8+ T-cells. Also implicated in the differentiation and maturation of dendritic cells and in the suppression of regulatory T (Treg) cells development. Acts as a tumor suppressor and plays a role not only in antagonism of tumor cell growth but also in stimulating an immune response against tumor cells. The sequence is that of Interferon regulatory factor 1 (Irf1) from Rattus norvegicus (Rat).